A 274-amino-acid chain; its full sequence is Small ribosomal subunit protein uS2 (274 aa).

Positions 255–274 are disordered; sequence AEAESEDKGEVLYSFDDEEE.

It belongs to the universal ribosomal protein uS2 family.

This is Small ribosomal subunit protein uS2 from Gloeobacter violaceus (strain ATCC 29082 / PCC 7421).